We begin with the raw amino-acid sequence, 312 residues long: tRNA dimethylallyltransferase (312 aa).

An ATP-binding site is contributed by 11 to 18 (GLTATGKT). 13-18 (TATGKT) lines the substrate pocket. The segment at 36-39 (DSMC) is interaction with substrate tRNA.

The protein belongs to the IPP transferase family. Monomer. It depends on Mg(2+) as a cofactor.

The enzyme catalyses adenosine(37) in tRNA + dimethylallyl diphosphate = N(6)-dimethylallyladenosine(37) in tRNA + diphosphate. Its function is as follows. Catalyzes the transfer of a dimethylallyl group onto the adenine at position 37 in tRNAs that read codons beginning with uridine, leading to the formation of N6-(dimethylallyl)adenosine (i(6)A). This is tRNA dimethylallyltransferase from Caldicellulosiruptor saccharolyticus (strain ATCC 43494 / DSM 8903 / Tp8T 6331).